The following is a 436-amino-acid chain: Protein Z-dependent protease inhibitor (436 aa).

The signal sequence occupies residues 1-20; it reads MRVVSSLFLPVLLAEVWLVS. N23, N42, and N69 each carry an N-linked (GlcNAc...) asparagine glycan. Positions 128 to 145 are heparin-binding; the sequence is AGPLILPALFKRVKETFS. N-linked (GlcNAc...) asparagine glycans are attached at residues N172, N189, and N287.

This sequence belongs to the serpin family. In terms of processing, phosphorylated by FAM20C in the extracellular medium. In terms of tissue distribution, expressed by the liver and secreted in plasma.

The protein resides in the secreted. Its function is as follows. Inhibits activity of the coagulation protease factor Xa in the presence of PROZ, calcium and phospholipids. Also inhibits factor XIa in the absence of cofactors. The sequence is that of Protein Z-dependent protease inhibitor (Serpina10) from Rattus norvegicus (Rat).